Consider the following 264-residue polypeptide: Late embryogenesis abundant protein D-34 (264 aa).

Low complexity predominate over residues 1-16; the sequence is MSQGQPRRPQQPAGQG. A disordered region spans residues 1–23; it reads MSQGQPRRPQQPAGQGENQEPIK. 3 consecutive SMP domains span residues 22 to 76, 138 to 194, and 203 to 261; these read IKYG…RNEQ, ITIG…AHNA, and IKLN…LNEN.

It belongs to the LEA type SMP family.

Its function is as follows. LEA proteins are late embryonic proteins abundant in higher plant seed embryos. There are two subsets of LEA proteins (5a and 5b), the first ones are expressed when the cotyledon weight reach 80 mg and the second set are expressed above 100 mg. The function of those proteins is not known. In Gossypium hirsutum (Upland cotton), this protein is Late embryogenesis abundant protein D-34.